Consider the following 156-residue polypeptide: Arginine repressor (156 aa).

The protein belongs to the ArgR family.

Its subcellular location is the cytoplasm. It functions in the pathway amino-acid biosynthesis; L-arginine biosynthesis [regulation]. Regulates arginine biosynthesis genes. This chain is Arginine repressor, found in Shewanella baltica (strain OS223).